We begin with the raw amino-acid sequence, 155 residues long: SsrA-binding protein (155 aa).

It belongs to the SmpB family.

Its subcellular location is the cytoplasm. In terms of biological role, required for rescue of stalled ribosomes mediated by trans-translation. Binds to transfer-messenger RNA (tmRNA), required for stable association of tmRNA with ribosomes. tmRNA and SmpB together mimic tRNA shape, replacing the anticodon stem-loop with SmpB. tmRNA is encoded by the ssrA gene; the 2 termini fold to resemble tRNA(Ala) and it encodes a 'tag peptide', a short internal open reading frame. During trans-translation Ala-aminoacylated tmRNA acts like a tRNA, entering the A-site of stalled ribosomes, displacing the stalled mRNA. The ribosome then switches to translate the ORF on the tmRNA; the nascent peptide is terminated with the 'tag peptide' encoded by the tmRNA and targeted for degradation. The ribosome is freed to recommence translation, which seems to be the essential function of trans-translation. This is SsrA-binding protein from Ligilactobacillus salivarius (strain UCC118) (Lactobacillus salivarius).